A 411-amino-acid polypeptide reads, in one-letter code: Ornithine cyclodeaminase (411 aa).

NAD(+) is bound by residues Asn-236, Ala-237, Asp-315, Thr-347, Met-348, Leu-349, His-350, Asp-368, Asp-391, and Val-392.

The protein belongs to the AgrE/ArgZ ornithine cyclodeaminase family. NAD(+) serves as cofactor.

It catalyses the reaction L-ornithine = L-proline + NH4(+). In terms of biological role, catalyzes the conversion of ornithine to proline, with the release of ammonia. The sequence is that of Ornithine cyclodeaminase from Methanothermobacter thermautotrophicus (strain ATCC 29096 / DSM 1053 / JCM 10044 / NBRC 100330 / Delta H) (Methanobacterium thermoautotrophicum).